A 539-amino-acid chain; its full sequence is BTB/POZ domain-containing protein 6 (539 aa).

The signal sequence occupies residues 1–23; it reads MLLPLACLHGRVAQCLTSLLVLA. Residues 137–207 enclose the BTB domain; it reads ADVHFIVGAL…MYSDEIDLEA (71 aa).

Its subcellular location is the cytoplasm. Its function is as follows. Adapter protein for the cul3 E3 ubiquitin-protein ligase complex. Involved in late neuronal development and muscle formation. The protein is BTB/POZ domain-containing protein 6 (Btbd6) of Mus musculus (Mouse).